The following is a 236-amino-acid chain: MPAYKRVLLKLSGEALMGDDAFGINRATIEGMVNDIAEIVKLGVQVAVVIGGGNIFRGVAGGAAGMDRATADYMGMLATMMNALALQDAMRHASIEGRVQSALRMDQVVEPYIRPRAIRQLEEGKVVIFAAGTGNPFFTTDTAAALRGSEIGAEIVLKATKVDGVYTADPKKDPSATRYTTISFDEAISRNLQVMDATAFALCRDQKLPIKVFSIVKPGALKRVILGEDEGTLVHV.

Residue 10–13 (KLSG) coordinates ATP. G52 provides a ligand contact to UMP. ATP-binding residues include G53 and R57. Residues D72 and 133-140 (TGNPFFTT) contribute to the UMP site. Positions 160, 166, and 169 each coordinate ATP.

It belongs to the UMP kinase family. As to quaternary structure, homohexamer.

The protein resides in the cytoplasm. The enzyme catalyses UMP + ATP = UDP + ADP. The protein operates within pyrimidine metabolism; CTP biosynthesis via de novo pathway; UDP from UMP (UMPK route): step 1/1. Its activity is regulated as follows. Inhibited by UTP. Functionally, catalyzes the reversible phosphorylation of UMP to UDP. The protein is Uridylate kinase of Cupriavidus metallidurans (strain ATCC 43123 / DSM 2839 / NBRC 102507 / CH34) (Ralstonia metallidurans).